We begin with the raw amino-acid sequence, 278 residues long: Diaminopimelate epimerase (278 aa).

Residues asparagine 13 and asparagine 66 each coordinate substrate. Cysteine 75 (proton donor) is an active-site residue. Substrate contacts are provided by residues 76–77 (GN), asparagine 162, asparagine 195, and 213–214 (ER). Cysteine 222 functions as the Proton acceptor in the catalytic mechanism. A substrate-binding site is contributed by 223-224 (GT).

The protein belongs to the diaminopimelate epimerase family. In terms of assembly, homodimer.

It is found in the cytoplasm. It carries out the reaction (2S,6S)-2,6-diaminopimelate = meso-2,6-diaminopimelate. Its pathway is amino-acid biosynthesis; L-lysine biosynthesis via DAP pathway; DL-2,6-diaminopimelate from LL-2,6-diaminopimelate: step 1/1. Functionally, catalyzes the stereoinversion of LL-2,6-diaminopimelate (L,L-DAP) to meso-diaminopimelate (meso-DAP), a precursor of L-lysine and an essential component of the bacterial peptidoglycan. This chain is Diaminopimelate epimerase, found in Trichodesmium erythraeum (strain IMS101).